We begin with the raw amino-acid sequence, 377 residues long: Queuine tRNA-ribosyltransferase (377 aa).

The active-site Proton acceptor is Asp89. Substrate contacts are provided by residues 89 to 93, Asp143, Gln188, and Gly215; that span reads DSGGF. Residues 246 to 252 are RNA binding; it reads GVGKPED. Asp265 functions as the Nucleophile in the catalytic mechanism. Residues 270–274 form an RNA binding; important for wobble base 34 recognition region; it reads TRNAR. Residues Cys303, Cys305, Cys308, and His334 each contribute to the Zn(2+) site.

The protein belongs to the queuine tRNA-ribosyltransferase family. As to quaternary structure, homodimer. Within each dimer, one monomer is responsible for RNA recognition and catalysis, while the other monomer binds to the replacement base PreQ1. Requires Zn(2+) as cofactor.

The catalysed reaction is 7-aminomethyl-7-carbaguanine + guanosine(34) in tRNA = 7-aminomethyl-7-carbaguanosine(34) in tRNA + guanine. It participates in tRNA modification; tRNA-queuosine biosynthesis. Its function is as follows. Catalyzes the base-exchange of a guanine (G) residue with the queuine precursor 7-aminomethyl-7-deazaguanine (PreQ1) at position 34 (anticodon wobble position) in tRNAs with GU(N) anticodons (tRNA-Asp, -Asn, -His and -Tyr). Catalysis occurs through a double-displacement mechanism. The nucleophile active site attacks the C1' of nucleotide 34 to detach the guanine base from the RNA, forming a covalent enzyme-RNA intermediate. The proton acceptor active site deprotonates the incoming PreQ1, allowing a nucleophilic attack on the C1' of the ribose to form the product. After dissociation, two additional enzymatic reactions on the tRNA convert PreQ1 to queuine (Q), resulting in the hypermodified nucleoside queuosine (7-(((4,5-cis-dihydroxy-2-cyclopenten-1-yl)amino)methyl)-7-deazaguanosine). In Acinetobacter baumannii (strain AB307-0294), this protein is Queuine tRNA-ribosyltransferase.